We begin with the raw amino-acid sequence, 282 residues long: Hydroxyethylthiazole kinase 2 (282 aa).

A substrate-binding site is contributed by M44. Positions 120 and 179 each coordinate ATP. G206 contributes to the substrate binding site.

It belongs to the Thz kinase family. Mg(2+) serves as cofactor.

The enzyme catalyses 5-(2-hydroxyethyl)-4-methylthiazole + ATP = 4-methyl-5-(2-phosphooxyethyl)-thiazole + ADP + H(+). It functions in the pathway cofactor biosynthesis; thiamine diphosphate biosynthesis; 4-methyl-5-(2-phosphoethyl)-thiazole from 5-(2-hydroxyethyl)-4-methylthiazole: step 1/1. Catalyzes the phosphorylation of the hydroxyl group of 4-methyl-5-beta-hydroxyethylthiazole (THZ). The chain is Hydroxyethylthiazole kinase 2 from Methanosphaera stadtmanae (strain ATCC 43021 / DSM 3091 / JCM 11832 / MCB-3).